We begin with the raw amino-acid sequence, 1090 residues long: DNA damage-binding protein 1 (1090 aa).

The protein belongs to the DDB1 family. As to quaternary structure, component of the UV-DDB complex, which is composed of DDB1 and DDB2. As to expression, expressed in proliferating tissues. Highly expressed in shoot apical meristem (SAM). Expressed in roots, young leaves, flag leaves, and panicles. Not detected in mature leaves.

Its subcellular location is the nucleus. In terms of biological role, required for DNA repair. Binds to DDB2 to form the UV-damaged DNA-binding protein complex (the UV-DDB complex). The UV-DDB complex may recognize UV-induced DNA damage and recruit proteins of the nucleotide excision repair pathway (the NER pathway) to initiate DNA repair. May function as the substrate recognition module for a DCX (DDB1-CUL4-X-box) E3 ubiquitin-protein ligase complex. The protein is DNA damage-binding protein 1 of Oryza sativa subsp. japonica (Rice).